A 229-amino-acid polypeptide reads, in one-letter code: uncharacterized protein (229 aa).

The protein to T.pallidum TP_0315, TP_0618 and TP_0619.

This is an uncharacterized protein from Treponema pallidum (strain Nichols).